The primary structure comprises 916 residues: Protein translocase subunit SecA (916 aa).

ATP-binding positions include Q87, 105-109 (GEGKT), and D507. Zn(2+) is bound by residues C900, C902, C911, and H912.

Belongs to the SecA family. Monomer and homodimer. Part of the essential Sec protein translocation apparatus which comprises SecA, SecYEG and auxiliary proteins SecDF-YajC and YidC. Requires Zn(2+) as cofactor.

The protein resides in the cell inner membrane. It localises to the cytoplasm. It catalyses the reaction ATP + H2O + cellular proteinSide 1 = ADP + phosphate + cellular proteinSide 2.. Functionally, part of the Sec protein translocase complex. Interacts with the SecYEG preprotein conducting channel. Has a central role in coupling the hydrolysis of ATP to the transfer of proteins into and across the cell membrane, serving both as a receptor for the preprotein-SecB complex and as an ATP-driven molecular motor driving the stepwise translocation of polypeptide chains across the membrane. The sequence is that of Protein translocase subunit SecA from Neisseria meningitidis serogroup C / serotype 2a (strain ATCC 700532 / DSM 15464 / FAM18).